The chain runs to 260 residues: Large ribosomal subunit protein uL2 (260 aa).

A disordered region spans residues 1–24; sequence MGRVIRAQRKGAGSVFKSHTHHRK.

It belongs to the universal ribosomal protein uL2 family.

The protein resides in the cytoplasm. This Solanum lycopersicum (Tomato) protein is Large ribosomal subunit protein uL2 (RPL8).